Reading from the N-terminus, the 307-residue chain is MANPLYKKNILSIADLSRTDLELVVQTASQLKQSPRHDLLQHKVIASCFFEASTRTRLSFETAVHRLGGSVIGFADAGNTSLAKKGETLADSVRVITSYTDAFVIRHPQEGAARLSAEFSSVPVINAGDGSNQHPTQTLLDLFSIYETQGTLDGLKLAFVGDLKYGRTVHSLAQALSLFGARFYFISPEALAMPDYICEELTEKGIEFSFHDTIEEVMPELDILYMTRVQKERFEESEYRHIAAKFVLSADELKTAKPNMKILHPLPRVDEIHTDVDDTNHAYYFQQAGNGVYARQALLALVLNEEV.

Residues R55 and T56 each coordinate carbamoyl phosphate. K85 serves as a coordination point for L-aspartate. 3 residues coordinate carbamoyl phosphate: R106, H134, and Q137. The L-aspartate site is built by R167 and R228. Residues L266 and P267 each contribute to the carbamoyl phosphate site.

This sequence belongs to the aspartate/ornithine carbamoyltransferase superfamily. ATCase family. In terms of assembly, heterododecamer (2C3:3R2) of six catalytic PyrB chains organized as two trimers (C3), and six regulatory PyrI chains organized as three dimers (R2).

The catalysed reaction is carbamoyl phosphate + L-aspartate = N-carbamoyl-L-aspartate + phosphate + H(+). It functions in the pathway pyrimidine metabolism; UMP biosynthesis via de novo pathway; (S)-dihydroorotate from bicarbonate: step 2/3. Catalyzes the condensation of carbamoyl phosphate and aspartate to form carbamoyl aspartate and inorganic phosphate, the committed step in the de novo pyrimidine nucleotide biosynthesis pathway. The sequence is that of Aspartate carbamoyltransferase catalytic subunit from Tolumonas auensis (strain DSM 9187 / NBRC 110442 / TA 4).